Here is a 39-residue protein sequence, read N- to C-terminus: Protein disulfide-isomerase A3 (39 aa).

It belongs to the protein disulfide isomerase family. Part of the major histocompatibility complex class I (MHC I) peptide loading complex composed of TAP1, TAP2, B2M, MHC heavy chain, TAPBP, PDIA3, and CALR. Interacts with ERP27 and CANX. Interacts with SERPINA2 and with SERPINA1. Interacts with ATP2A2. Within the major histocompatibility complex class I (MHC I) peptide loading complex forms reversible disulfide-linked heterodimers with TAPBP as part of its protein folding chaperone activity. This is essential to assist the dynamic assembly of the MHC I complex with high affinity antigens in the endoplasmic reticulum. In terms of processing, phosphorylated. In terms of tissue distribution, predominantly expressed in liver. Low in brain, testis and colon. Not detectable in pancreas and skeletal muscle.

The protein localises to the endoplasmic reticulum. The protein resides in the endoplasmic reticulum lumen. It is found in the melanosome. It carries out the reaction Catalyzes the rearrangement of -S-S- bonds in proteins.. Its function is as follows. Protein disulfide isomerase that catalyzes the formation, isomerization, and reduction or oxidation of disulfide bonds in client proteins and functions as a protein folding chaperone. Core component of the major histocompatibility complex class I (MHC I) peptide loading complex where it functions as an essential folding chaperone for TAPBP. Through TAPBP, assists the dynamic assembly of the MHC I complex with high affinity antigens in the endoplasmic reticulum. Therefore, plays a crucial role in the presentation of antigens to cytotoxic T cells in adaptive immunity. This chain is Protein disulfide-isomerase A3 (PDIA3), found in Papio hamadryas (Hamadryas baboon).